The primary structure comprises 1103 residues: Detocs histidine-protein kinase DtcA (1103 aa).

Phosphohistidine; by autocatalysis is present on histidine 758. A TPR repeat occupies 818-851 (TIINDAKEKVHINTGEFIESAKVFNYAIEIEFVE).

Autophosphorylated.

The catalysed reaction is ATP + protein L-histidine = ADP + protein N-phospho-L-histidine.. In terms of biological role, sensor-kinase member of the two-component regulatory system Detocs that confers resistance to bacteriophage. When the system (DtcA-DtcB-DtcC) is expressed in a susceptible E.coli (strain MG1655) it confers resistance to bacteriophages T2, T4, T5, T7, SECphi4, SECphi6 and SECphi27; the level of resistance varies, resistance to T2, T7 and SECphi4 is not very high. DtcA (this subunit) probably autophosphorylates upon sensing viral infection, and subsequently transfers the phosphate signal to DtcC which activates it, leading to an antiviral defense; DtcB may scavenge phosphorylation signals from accidental activation of DtcA. The polypeptide is Detocs histidine-protein kinase DtcA (Enterobacter cloacae (strain JD6301)).